The primary structure comprises 746 residues: Protein Niban 2 (746 aa).

Residue glycine 2 is the site of N-myristoyl glycine attachment. Residues 68–192 (RIVFSGNLFQ…WQAVLQDCIR (125 aa)) enclose the PH domain. 4 positions are modified to phosphoserine: serine 568, serine 574, serine 601, and serine 603. Positions 590 to 746 (GEEYSNSGGG…EDSAGVQTEF (157 aa)) are disordered. The residue at position 606 (threonine 606) is a Phosphothreonine. A phosphoserine mark is found at serine 609, serine 624, serine 638, serine 641, serine 646, serine 665, serine 681, serine 692, and serine 696. A compositionally biased stretch (low complexity) spans 671–693 (PLLNGAPAGESPQPKAAPEASSP). Over residues 720 to 746 (GEQVSSPSSHPALHTTTEDSAGVQTEF) the composition is skewed to polar residues.

This sequence belongs to the Niban family. Phosphorylated at Ser-641, Ser-646, Ser-692 and Ser-696 by the BRAF/MKK/ERK signaling cascade. In melanoma cells, the C-terminal phosphorylation may prevent targeting to the plasma membrane. In terms of processing, as apoptosis proceeds, degraded via an proteasome-independent pathway, probably by caspases.

It is found in the cytoplasm. The protein localises to the cytosol. It localises to the cell junction. The protein resides in the adherens junction. Its subcellular location is the membrane. Functionally, may play a role in apoptosis suppression. May promote melanoma cell invasion in vitro. The sequence is that of Protein Niban 2 from Homo sapiens (Human).